The primary structure comprises 219 residues: Large ribosomal subunit protein bL25 (219 aa).

The interval 176 to 219 (VTVVPPTDEPSEEEVEAMEGESATEEPEVVGEDKEDDEEENKED) is disordered. The span at 184–219 (EPSEEEVEAMEGESATEEPEVVGEDKEDDEEENKED) shows a compositional bias: acidic residues.

It belongs to the bacterial ribosomal protein bL25 family. CTC subfamily. As to quaternary structure, part of the 50S ribosomal subunit; part of the 5S rRNA/L5/L18/L25 subcomplex. Contacts the 5S rRNA. Binds to the 5S rRNA independently of L5 and L18.

In terms of biological role, this is one of the proteins that binds to the 5S RNA in the ribosome where it forms part of the central protuberance. This Staphylococcus epidermidis (strain ATCC 35984 / DSM 28319 / BCRC 17069 / CCUG 31568 / BM 3577 / RP62A) protein is Large ribosomal subunit protein bL25.